The primary structure comprises 671 residues: tRNA(Met) cytidine acetyltransferase TmcA (671 aa).

Residues glutamine 180, 202–211 (GRGKSALAGQ), and arginine 319 each bind ATP. Positions 356-531 (QTLWRSEPET…SGCYTAMALL (176 aa)) constitute an N-acetyltransferase domain. Acetyl-CoA-binding positions include 461–463 (IAV), 468–474 (QREGTGR), glutamate 499, and arginine 506.

Belongs to the RNA cytidine acetyltransferase family. TmcA subfamily.

The protein localises to the cytoplasm. It carries out the reaction cytidine(34) in elongator tRNA(Met) + acetyl-CoA + ATP + H2O = N(4)-acetylcytidine(34) in elongator tRNA(Met) + ADP + phosphate + CoA + H(+). Catalyzes the formation of N(4)-acetylcytidine (ac(4)C) at the wobble position of tRNA(Met), by using acetyl-CoA as an acetyl donor and ATP (or GTP). The protein is tRNA(Met) cytidine acetyltransferase TmcA of Shigella flexneri serotype 5b (strain 8401).